Consider the following 63-residue polypeptide: Conotoxin Pn-B01411 (63 aa).

The first 22 residues, 1-22 (MRCFPVFIILLLLMASAPSFDA), serve as a signal peptide directing secretion. A propeptide spanning residues 23-49 (RPKTEDDVPLSSFRDNLKRTLRTLLDP) is cleaved from the precursor. I62 is subject to Isoleucine amide.

It belongs to the conotoxin T superfamily. In terms of processing, contains 2 disulfide bonds that can be either 'C1-C3, C2-C4' or 'C1-C4, C2-C3', since these disulfide connectivities have been observed for conotoxins with cysteine framework V (for examples, see AC P0DQQ7 and AC P81755). In terms of tissue distribution, expressed by the venom duct.

It localises to the secreted. This Conus pennaceus (Feathered cone) protein is Conotoxin Pn-B01411.